The following is a 266-amino-acid chain: Elongator complex protein 6 (266 aa).

It belongs to the ELP6 family. In terms of assembly, component of the elongator complex which consists of ELP1, ELP2, ELP3, ELP4, ELP5 and ELP6.

The protein resides in the cytoplasm. Its subcellular location is the nucleus. The protein operates within tRNA modification; 5-methoxycarbonylmethyl-2-thiouridine-tRNA biosynthesis. In terms of biological role, component of the elongator complex which is required for multiple tRNA modifications, including mcm5U (5-methoxycarbonylmethyl uridine), mcm5s2U (5-methoxycarbonylmethyl-2-thiouridine), and ncm5U (5-carbamoylmethyl uridine). The elongator complex catalyzes formation of carboxymethyluridine in the wobble base at position 34 in tRNAs. Involved in cell migration. The polypeptide is Elongator complex protein 6 (Homo sapiens (Human)).